The following is a 138-amino-acid chain: Actophorin (138 aa).

One can recognise an ADF-H domain in the interval 3-134 (GIQLADEVTS…NLDEVIAKVK (132 aa)).

This sequence belongs to the actin-binding proteins ADF family. Interacts with F-actin. Does not interact with G-actin. Interacts with 14-3-3 protein 3.

Its subcellular location is the cytoplasm. It localises to the cytoskeleton. It is found in the cell membrane. The protein localises to the cell projection. The protein resides in the phagocytic cup. Its subcellular location is the pseudopodium. In terms of biological role, actin-binding protein that severs actin filaments. This Entamoeba histolytica (strain ATCC 30459 / HM-1:IMSS / ABRM) protein is Actophorin.